A 208-amino-acid chain; its full sequence is Ribosomal RNA large subunit methyltransferase E (208 aa).

The S-adenosyl-L-methionine site is built by glycine 63, tryptophan 65, aspartate 83, aspartate 99, and aspartate 124. The active-site Proton acceptor is lysine 164.

The protein belongs to the class I-like SAM-binding methyltransferase superfamily. RNA methyltransferase RlmE family.

The protein resides in the cytoplasm. It catalyses the reaction uridine(2552) in 23S rRNA + S-adenosyl-L-methionine = 2'-O-methyluridine(2552) in 23S rRNA + S-adenosyl-L-homocysteine + H(+). Functionally, specifically methylates the uridine in position 2552 of 23S rRNA at the 2'-O position of the ribose in the fully assembled 50S ribosomal subunit. The chain is Ribosomal RNA large subunit methyltransferase E from Hamiltonella defensa subsp. Acyrthosiphon pisum (strain 5AT).